Reading from the N-terminus, the 482-residue chain is Replication factor C large subunit (482 aa).

ATP is bound at residue 46–53; it reads GPPGSGKT. Residues 420–482 are disordered; it reads EKETPKKKKK…KKQATLDSFF (63 aa). Residues 442 to 476 are compositionally biased toward basic and acidic residues; it reads KISEPPKEPLKEVIEETVEKTDKKEKEKKDPKKQA.

It belongs to the activator 1 small subunits family. RfcL subfamily. In terms of assembly, heteromultimer composed of small subunits (RfcS) and large subunits (RfcL).

In terms of biological role, part of the RFC clamp loader complex which loads the PCNA sliding clamp onto DNA. The protein is Replication factor C large subunit of Methanococcus maripaludis (strain C7 / ATCC BAA-1331).